A 201-amino-acid chain; its full sequence is Auxin-binding protein 1 (201 aa).

Positions Met1–Ser38 are cleaved as a signal peptide. A disulfide bridge connects residues Cys40 and Cys193. The Zn(2+) site is built by His95, His97, and Glu101. N-linked (GlcNAc...) asparagine glycosylation occurs at Asn133. A Zn(2+)-binding site is contributed by His144. A Prevents secretion from ER motif is present at residues Lys198–Leu201.

As to quaternary structure, homodimer. In terms of processing, glycosylated. Expressed in roots, coleoptiles, leaves, stems, tassels and ears.

It is found in the endoplasmic reticulum lumen. In terms of biological role, receptor for the plant hormone auxin. This Zea mays (Maize) protein is Auxin-binding protein 1.